The chain runs to 121 residues: MTNGRKMEYKLVDSEKDIERSYEPRRKPKRSRIQLHDWQSMLLEHSFRMNPYPDRIEKYNLFLKTKIPMKNVKIWFQNRRAREKSFYEEAVEVHRDGRRAGHRSLGSRSALFAEEFQYRRY.

The homeobox DNA-binding region spans 28 to 87 (PKRSRIQLHDWQSMLLEHSFRMNPYPDRIEKYNLFLKTKIPMKNVKIWFQNRRAREKSFY).

It is found in the nucleus. In Encephalitozoon cuniculi (strain GB-M1) (Microsporidian parasite), this protein is Homeobox protein HD-6 (HD-6).